We begin with the raw amino-acid sequence, 818 residues long: Glycerol-3-phosphate acyltransferase (818 aa).

Positions 308–313 (CHRSHM) match the HXXXXD motif motif.

The protein belongs to the GPAT/DAPAT family.

The protein localises to the cell inner membrane. The enzyme catalyses sn-glycerol 3-phosphate + an acyl-CoA = a 1-acyl-sn-glycero-3-phosphate + CoA. It functions in the pathway phospholipid metabolism; CDP-diacylglycerol biosynthesis; CDP-diacylglycerol from sn-glycerol 3-phosphate: step 1/3. This is Glycerol-3-phosphate acyltransferase from Alteromonas mediterranea (strain DSM 17117 / CIP 110805 / LMG 28347 / Deep ecotype).